A 202-amino-acid polypeptide reads, in one-letter code: Imidazoleglycerol-phosphate dehydratase (202 aa).

The protein belongs to the imidazoleglycerol-phosphate dehydratase family.

It is found in the cytoplasm. It catalyses the reaction D-erythro-1-(imidazol-4-yl)glycerol 3-phosphate = 3-(imidazol-4-yl)-2-oxopropyl phosphate + H2O. It participates in amino-acid biosynthesis; L-histidine biosynthesis; L-histidine from 5-phospho-alpha-D-ribose 1-diphosphate: step 6/9. The protein is Imidazoleglycerol-phosphate dehydratase of Parasynechococcus marenigrum (strain WH8102).